A 497-amino-acid chain; its full sequence is Putative diacyglycerol O-acyltransferase MT3584 (497 aa).

Histidine 143 acts as the Proton acceptor in catalysis.

This sequence belongs to the long-chain O-acyltransferase family.

It catalyses the reaction an acyl-CoA + a 1,2-diacyl-sn-glycerol = a triacyl-sn-glycerol + CoA. The protein operates within glycerolipid metabolism; triacylglycerol biosynthesis. The polypeptide is Putative diacyglycerol O-acyltransferase MT3584 (Mycobacterium tuberculosis (strain CDC 1551 / Oshkosh)).